A 379-amino-acid chain; its full sequence is Cell division protein FtsZ (379 aa).

GTP-binding positions include 18-22 (GGGVN), 105-107 (GTG), glutamate 136, arginine 140, and aspartate 184.

It belongs to the FtsZ family. As to quaternary structure, homodimer. Polymerizes to form a dynamic ring structure in a strictly GTP-dependent manner. Interacts directly with several other division proteins.

It is found in the cytoplasm. Functionally, essential cell division protein that forms a contractile ring structure (Z ring) at the future cell division site. The regulation of the ring assembly controls the timing and the location of cell division. One of the functions of the FtsZ ring is to recruit other cell division proteins to the septum to produce a new cell wall between the dividing cells. Binds GTP and shows GTPase activity. The protein is Cell division protein FtsZ of Mycobacterium leprae (strain TN).